The following is a 459-amino-acid chain: tRNA modification GTPase MnmE (459 aa).

(6S)-5-formyl-5,6,7,8-tetrahydrofolate-binding residues include arginine 29, glutamate 91, and arginine 130. A TrmE-type G domain is found at 225-381 (GVKVAIVGRP…LEEALEQLVT (157 aa)). Asparagine 235 contributes to the K(+) binding site. GTP-binding positions include 235–240 (NVGKSS), 254–260 (TDLPGTT), and 279–282 (DTAG). Residue serine 239 coordinates Mg(2+). Positions 254, 256, and 259 each coordinate K(+). Mg(2+) is bound at residue threonine 260. Lysine 459 is a (6S)-5-formyl-5,6,7,8-tetrahydrofolate binding site.

This sequence belongs to the TRAFAC class TrmE-Era-EngA-EngB-Septin-like GTPase superfamily. TrmE GTPase family. In terms of assembly, homodimer. Heterotetramer of two MnmE and two MnmG subunits. The cofactor is K(+).

It localises to the cytoplasm. Its function is as follows. Exhibits a very high intrinsic GTPase hydrolysis rate. Involved in the addition of a carboxymethylaminomethyl (cmnm) group at the wobble position (U34) of certain tRNAs, forming tRNA-cmnm(5)s(2)U34. This chain is tRNA modification GTPase MnmE, found in Synechococcus sp. (strain JA-3-3Ab) (Cyanobacteria bacterium Yellowstone A-Prime).